Reading from the N-terminus, the 358-residue chain is Alanine racemase (358 aa).

The Proton acceptor; specific for D-alanine role is filled by Lys34. The residue at position 34 (Lys34) is an N6-(pyridoxal phosphate)lysine. Arg129 contacts substrate. Catalysis depends on Tyr254, which acts as the Proton acceptor; specific for L-alanine. Met302 is a substrate binding site.

This sequence belongs to the alanine racemase family. Pyridoxal 5'-phosphate serves as cofactor.

The enzyme catalyses L-alanine = D-alanine. It functions in the pathway amino-acid biosynthesis; D-alanine biosynthesis; D-alanine from L-alanine: step 1/1. Catalyzes the interconversion of L-alanine and D-alanine. May also act on other amino acids. The protein is Alanine racemase (alr) of Vibrio parahaemolyticus serotype O3:K6 (strain RIMD 2210633).